Consider the following 221-residue polypeptide: Serine/arginine-rich splicing factor 2 (221 aa).

N-acetylserine is present on serine 2. Phosphoserine is present on serine 2. The RRM domain maps to 14–92 (TSLKVDNLTY…RELRVQMARY (79 aa)). Phosphothreonine is present on residues threonine 22 and threonine 25. Serine 26 carries the post-translational modification Phosphoserine. Lysine 52 bears the N6-acetyllysine mark. The segment at 92–221 (YGRPPDSHHS…SPEEEGAVSS (130 aa)) is disordered. Composition is skewed to basic residues over residues 117–171 (RRSR…RSKS) and 179–189 (SRSRSRSRSRS). 7 positions are modified to phosphoserine: serine 189, serine 191, serine 204, serine 206, serine 208, serine 212, and serine 220.

Belongs to the splicing factor SR family. As to quaternary structure, in vitro, self-associates and binds SRSF1/SFRS1 (ASF/SF2), SNRNP70 and U2AF1 but not U2AF2. Binds SREK1/SFRS12. Interacts with CCNL1 and CCNL2. Interacts with SCAF11. Interacts with ZRSR2/U2AF1-RS2. Interacts with CCDC55 (via C-terminus). Interacts with BRDT. Extensively phosphorylated on serine residues in the RS domain. Phosphorylated by SRPK2 and this causes its redistribution from the nuclear speckle to nucleoplasm and controls cell fate decision in response to cisplatin treatment. KAT5/TIP60 inhibits its phosphorylation by preventing SRPK2 nuclear translocation. In terms of processing, acetylation on Lys-52 by KAT5/TIP60 promotes its proteasomal degradation. This effect is counterbalanced by HDAC6, which positively controls SRSF2 protein level by deacetylating it and preventing its proteasomal degradation.

The protein localises to the nucleus. Its subcellular location is the nucleoplasm. The protein resides in the nucleus speckle. In terms of biological role, necessary for the splicing of pre-mRNA. It is required for formation of the earliest ATP-dependent splicing complex and interacts with spliceosomal components bound to both the 5'- and 3'-splice sites during spliceosome assembly. It also is required for ATP-dependent interactions of both U1 and U2 snRNPs with pre-mRNA. Interacts with other spliceosomal components, via the RS domains, to form a bridge between the 5'- and 3'-splice site binding components, U1 snRNP and U2AF. Binds to purine-rich RNA sequences, either 5'-AGSAGAGTA-3' (S=C or G) or 5'-GTTCGAGTA-3'. Can bind to beta-globin mRNA and commit it to the splicing pathway. The phosphorylated form (by SRPK2) is required for cellular apoptosis in response to cisplatin treatment. The protein is Serine/arginine-rich splicing factor 2 (SRSF2) of Sus scrofa (Pig).